The chain runs to 426 residues: Protein arginine methyltransferase NDUFAF7 homolog, mitochondrial (426 aa).

The protein belongs to the NDUFAF7 family.

The protein resides in the mitochondrion. The catalysed reaction is L-arginyl-[protein] + 2 S-adenosyl-L-methionine = N(omega),N(omega)'-dimethyl-L-arginyl-[protein] + 2 S-adenosyl-L-homocysteine + 2 H(+). In terms of biological role, arginine methyltransferase involved in the assembly or stability of mitochondrial NADH:ubiquinone oxidoreductase complex (complex I). The polypeptide is Protein arginine methyltransferase NDUFAF7 homolog, mitochondrial (Caenorhabditis elegans).